We begin with the raw amino-acid sequence, 398 residues long: Unsaturated chondroitin disaccharide hydrolase (398 aa).

D115 (nucleophile) is an active-site residue. Residues D115, D175, G233, T235, R247, W251, S365, and S368 each contribute to the substrate site. The active-site Proton donor is D175.

Belongs to the glycosyl hydrolase 88 family. In terms of assembly, monomer.

The catalysed reaction is beta-D-4-deoxy-Delta(4)-GlcpA-(1-&gt;3)-beta-D-GalpNAc6S + H2O = N-acetyl-beta-D-galactosamine 6-sulfate + 5-dehydro-4-deoxy-D-glucuronate. Catalyzes the hydrolysis of unsaturated hyaluronate and chondroitin disaccharides. Also degrades unsaturated heparin disaccharides. Releases 4-deoxy-4,5-didehydro D-glucuronic acid or 4-deoxy-4,5-didehydro L-iduronic acid from chondroitin disaccharides, hyaluronan disaccharides and heparin disaccharides and cleaves both glycosidic (1-&gt;3) and (1-&gt;4) bonds. Prefers sulfated glycosaminoglycans compared to unsulfated glycosaminoglycans. Probably required for mammalian cells invasion through the degradation of extracellular sulfated glycosaminoglycans such as chondroitin and hyaluronan. This is Unsaturated chondroitin disaccharide hydrolase from Streptococcus agalactiae serotype III (strain NEM316).